The chain runs to 342 residues: Isopentenyl-diphosphate delta-isomerase (342 aa).

Residue 12–13 (RK) participates in substrate binding. FMN contacts are provided by residues 71–73 (AMT), Ser-101, and Asn-129. Substrate is bound at residue 101 to 103 (SQR). A substrate-binding site is contributed by Gln-163. Glu-164 lines the Mg(2+) pocket. FMN-binding positions include Lys-195, Thr-225, 272–274 (GIR), and 293–294 (AR).

Belongs to the IPP isomerase type 2 family. As to quaternary structure, homooctamer. Dimer of tetramers. It depends on FMN as a cofactor. NADPH is required as a cofactor. Mg(2+) serves as cofactor.

The protein resides in the cytoplasm. It catalyses the reaction isopentenyl diphosphate = dimethylallyl diphosphate. Involved in the biosynthesis of isoprenoids. Catalyzes the 1,3-allylic rearrangement of the homoallylic substrate isopentenyl (IPP) to its allylic isomer, dimethylallyl diphosphate (DMAPP). The sequence is that of Isopentenyl-diphosphate delta-isomerase from Mycolicibacterium gilvum (strain PYR-GCK) (Mycobacterium gilvum (strain PYR-GCK)).